The sequence spans 158 residues: Arginine repressor (158 aa).

It belongs to the ArgR family.

Its subcellular location is the cytoplasm. The protein operates within amino-acid biosynthesis; L-arginine biosynthesis [regulation]. Regulates arginine biosynthesis genes. In Phocaeicola vulgatus (strain ATCC 8482 / DSM 1447 / JCM 5826 / CCUG 4940 / NBRC 14291 / NCTC 11154) (Bacteroides vulgatus), this protein is Arginine repressor.